Here is a 77-residue protein sequence, read N- to C-terminus: Translation initiation factor IF-1, chloroplastic (77 aa).

The 71-residue stretch at 1 to 71 (MKEQKLIHEG…TKGRIIYRLR (71 aa)) folds into the S1-like domain.

Belongs to the IF-1 family. As to quaternary structure, component of the 30S ribosomal translation pre-initiation complex which assembles on the 30S ribosome in the order IF-2 and IF-3, IF-1 and N-formylmethionyl-tRNA(fMet); mRNA recruitment can occur at any time during PIC assembly.

It localises to the plastid. The protein resides in the chloroplast. Functionally, one of the essential components for the initiation of protein synthesis. Stabilizes the binding of IF-2 and IF-3 on the 30S subunit to which N-formylmethionyl-tRNA(fMet) subsequently binds. Helps modulate mRNA selection, yielding the 30S pre-initiation complex (PIC). Upon addition of the 50S ribosomal subunit IF-1, IF-2 and IF-3 are released leaving the mature 70S translation initiation complex. The polypeptide is Translation initiation factor IF-1, chloroplastic (Dioscorea elephantipes (Elephant's foot yam)).